Reading from the N-terminus, the 150-residue chain is Transcription antitermination protein NusB (150 aa).

It belongs to the NusB family.

Its function is as follows. Involved in transcription antitermination. Required for transcription of ribosomal RNA (rRNA) genes. Binds specifically to the boxA antiterminator sequence of the ribosomal RNA (rrn) operons. This is Transcription antitermination protein NusB from Streptococcus pyogenes serotype M6 (strain ATCC BAA-946 / MGAS10394).